Consider the following 130-residue polypeptide: Small ribosomal subunit protein uS9 (130 aa).

The protein belongs to the universal ribosomal protein uS9 family.

In Streptococcus thermophilus (strain CNRZ 1066), this protein is Small ribosomal subunit protein uS9.